Reading from the N-terminus, the 467-residue chain is Cysteine--tRNA ligase (467 aa).

Cysteine 28 contributes to the Zn(2+) binding site. Residues 30–40 (ITAYDYSHIGH) carry the 'HIGH' region motif. Positions 211, 236, and 240 each coordinate Zn(2+). Positions 268 to 272 (KMSKS) match the 'KMSKS' region motif. Position 271 (lysine 271) interacts with ATP.

It belongs to the class-I aminoacyl-tRNA synthetase family. The cofactor is Zn(2+).

Its subcellular location is the cytoplasm. It carries out the reaction tRNA(Cys) + L-cysteine + ATP = L-cysteinyl-tRNA(Cys) + AMP + diphosphate. In Archaeoglobus fulgidus (strain ATCC 49558 / DSM 4304 / JCM 9628 / NBRC 100126 / VC-16), this protein is Cysteine--tRNA ligase (cysS).